We begin with the raw amino-acid sequence, 407 residues long: L-cysteine:1D-myo-inositol 2-amino-2-deoxy-alpha-D-glucopyranoside ligase (407 aa).

Residues 1 to 22 (MRSWSAPDIVPLPGTGGPLRVH) are disordered. C43 provides a ligand contact to Zn(2+). L-cysteinyl-5'-AMP is bound by residues 43–46 (CGIT), T58, and 81–83 (NTT). The short motif at 45–55 (ITPYDAAHLGH) is the 'HIGH' region element. The 'ERGGDP' region motif lies at 183 to 188 (ERGGDP). W223 provides a ligand contact to L-cysteinyl-5'-AMP. C227 is a Zn(2+) binding site. 245-247 (GSD) provides a ligand contact to L-cysteinyl-5'-AMP. A Zn(2+)-binding site is contributed by H252. V278 is an L-cysteinyl-5'-AMP binding site. The 'KMSKS' region signature appears at 284 to 288 (KMSKS).

It belongs to the class-I aminoacyl-tRNA synthetase family. MshC subfamily. As to quaternary structure, monomer. It depends on Zn(2+) as a cofactor.

It catalyses the reaction 1D-myo-inositol 2-amino-2-deoxy-alpha-D-glucopyranoside + L-cysteine + ATP = 1D-myo-inositol 2-(L-cysteinylamino)-2-deoxy-alpha-D-glucopyranoside + AMP + diphosphate + H(+). Functionally, catalyzes the ATP-dependent condensation of GlcN-Ins and L-cysteine to form L-Cys-GlcN-Ins. This is L-cysteine:1D-myo-inositol 2-amino-2-deoxy-alpha-D-glucopyranoside ligase from Nocardiopsis dassonvillei (strain ATCC 23218 / DSM 43111 / CIP 107115 / JCM 7437 / KCTC 9190 / NBRC 14626 / NCTC 10488 / NRRL B-5397 / IMRU 509) (Actinomadura dassonvillei).